A 479-amino-acid chain; its full sequence is Muscarinic acetylcholine receptor M4 (479 aa).

At 1 to 31 (MANFTPVNGSSGNQSVRLVTSSSHNRYETVE) the chain is on the extracellular side. N-linked (GlcNAc...) asparagine glycosylation is found at N8 and N13. The chain crosses the membrane as a helical span at residues 32–54 (MVFIATVTGSLSLVTVVGNILVM). At 55-68 (LSIKVNRQLQTVNN) the chain is on the cytoplasmic side. A helical membrane pass occupies residues 69 to 89 (YFLFSLACADLIIGAFSMNLY). The Extracellular portion of the chain corresponds to 90 to 106 (TVYIIKGYWPLGAVVCD). An intrachain disulfide couples C105 to C185. The helical transmembrane segment at 107–128 (LWLALDYVVSNASVMNLLIISF) threads the bilayer. Over 129–148 (DRYFCVTKPLTYPARRTTKM) the chain is Cytoplasmic. The chain crosses the membrane as a helical span at residues 149–171 (AGLMIAAAWVLSFVLWAPAILFW). Residues 172–193 (QFVVGKRTVPDNQCFIQFLSNP) lie on the Extracellular side of the membrane. Residues 194 to 216 (AVTFGTAIAAFYLPVVIMTVLYI) form a helical membrane-spanning segment. Residues 217-401 (HISLASRSRV…AARERKVTRT (185 aa)) lie on the Cytoplasmic side of the membrane. The disordered stretch occupies residues 271–333 (KLEEAPPPAL…PAPPLQPRAL (63 aa)). The segment covering 275-286 (APPPALPPPPRP) has biased composition (pro residues). The segment covering 294 to 304 (NESSSGSATQN) has biased composition (polar residues). The helical transmembrane segment at 402-422 (IFAILLAFILTWTPYNVMVLV) threads the bilayer. Residues 423 to 436 (NTFCQSCIPDTVWS) lie on the Extracellular side of the membrane. A helical membrane pass occupies residues 437 to 456 (IGYWLCYVNSTINPACYALC). The Cytoplasmic portion of the chain corresponds to 457 to 479 (NATFKKTFRHLLLCQYRNIGTAR). 3 positions are modified to phosphothreonine: T459, T463, and T477.

It belongs to the G-protein coupled receptor 1 family. Muscarinic acetylcholine receptor subfamily. CHRM4 sub-subfamily.

It localises to the cell membrane. The protein localises to the postsynaptic cell membrane. Its function is as follows. The muscarinic acetylcholine receptor mediates various cellular responses, including inhibition of adenylate cyclase, breakdown of phosphoinositides and modulation of potassium channels through the action of G proteins. Primary transducing effect is inhibition of adenylate cyclase. This Homo sapiens (Human) protein is Muscarinic acetylcholine receptor M4 (CHRM4).